Reading from the N-terminus, the 752-residue chain is F-box and WD repeat domain containing protein 10B (752 aa).

WD repeat units follow at residues 169-206 (GLNQ…TSLP), 451-490 (GHAG…CTRI), 493-532 (GHQG…KTFR), 534-569 (KDPI…LVKT), 572-609 (GHEG…ERCL), and 611-652 (AFKH…KVIK).

In terms of tissue distribution, expressed in pancreas, heart and skeletal muscle.

The sequence is that of F-box and WD repeat domain containing protein 10B from Homo sapiens (Human).